We begin with the raw amino-acid sequence, 160 residues long: MNPRRKQRLTWVAILVIGVSVATGLMLYALSQSIDLFYTPTELVEGKGKDKQKPQVGQRMRVGGMVVEGSVERDRETLEVSFKITDIGPEVTVLYQGILPDLFREGQGIVAQGELIEPTVLKASEVLAKHDEEYMPPELAEQMKGIKHVNPNTVEKGEGQ.

Residues Met-1 to Arg-8 are Cytoplasmic-facing. A helical; Signal-anchor for type II membrane protein transmembrane segment spans residues Leu-9 to Ala-29. The Periplasmic portion of the chain corresponds to Leu-30–Gln-160. Positions 130 and 134 each coordinate heme.

This sequence belongs to the CcmE/CycJ family.

The protein localises to the cell inner membrane. Heme chaperone required for the biogenesis of c-type cytochromes. Transiently binds heme delivered by CcmC and transfers the heme to apo-cytochromes in a process facilitated by CcmF and CcmH. The sequence is that of Cytochrome c-type biogenesis protein CcmE from Idiomarina loihiensis (strain ATCC BAA-735 / DSM 15497 / L2-TR).